Consider the following 340-residue polypeptide: Phosphoribosylformylglycinamidine cyclo-ligase (340 aa).

It belongs to the AIR synthase family.

The protein resides in the cytoplasm. The enzyme catalyses 2-formamido-N(1)-(5-O-phospho-beta-D-ribosyl)acetamidine + ATP = 5-amino-1-(5-phospho-beta-D-ribosyl)imidazole + ADP + phosphate + H(+). It participates in purine metabolism; IMP biosynthesis via de novo pathway; 5-amino-1-(5-phospho-D-ribosyl)imidazole from N(2)-formyl-N(1)-(5-phospho-D-ribosyl)glycinamide: step 2/2. The protein is Phosphoribosylformylglycinamidine cyclo-ligase of Streptococcus agalactiae serotype Ia (strain ATCC 27591 / A909 / CDC SS700).